Reading from the N-terminus, the 365-residue chain is 3-dehydroquinate synthase (365 aa).

Residues 69–74, 103–107, 127–128, Lys-140, and Lys-149 each bind NAD(+); these read DGEKYK, GVIGD, and TT. Positions 182, 245, and 262 each coordinate Zn(2+).

Belongs to the sugar phosphate cyclases superfamily. Dehydroquinate synthase family. Co(2+) serves as cofactor. Zn(2+) is required as a cofactor. The cofactor is NAD(+).

It is found in the cytoplasm. The catalysed reaction is 7-phospho-2-dehydro-3-deoxy-D-arabino-heptonate = 3-dehydroquinate + phosphate. The protein operates within metabolic intermediate biosynthesis; chorismate biosynthesis; chorismate from D-erythrose 4-phosphate and phosphoenolpyruvate: step 2/7. Catalyzes the conversion of 3-deoxy-D-arabino-heptulosonate 7-phosphate (DAHP) to dehydroquinate (DHQ). The protein is 3-dehydroquinate synthase of Pseudomonas entomophila (strain L48).